The following is a 346-amino-acid chain: MDTAERLDLVTRHTTEVVTEDELRTLFEESDPSAYIGYAPTGEMHIGHFTTMRKLADFLRAGVDVTVLIADLHAHLDDNKSPFDLLDARSAYYETAIEGMIEAAGADPEDVTFVRGTDFQLDEEYTLEMYRMAAETTISRTQRAASEVVRESESPNLGGLIYPLMQTLDVKALDADIAYGGVDQRGIYMLSREILPDHGGESPICLFAPLLSGLSGGKMSASDEASKVNLTDSPDEVDEKINQAYCPAGEVEENGVLEYLQHLVFPVLDVRGDSFVVERPEEYGGDLTYESYDEVESDFVSGELHPADLKPSAASAISDVIDPVRERLADKDELLAEAYPEKYGAE.

Tyr-35 serves as a coordination point for L-tyrosine. The 'HIGH' region motif lies at 40–48; it reads PTGEMHIGH. Residues Tyr-162, Gln-166, Asp-169, and Gln-184 each contribute to the L-tyrosine site.

The protein belongs to the class-I aminoacyl-tRNA synthetase family. TyrS type 3 subfamily. Homodimer.

Its subcellular location is the cytoplasm. It catalyses the reaction tRNA(Tyr) + L-tyrosine + ATP = L-tyrosyl-tRNA(Tyr) + AMP + diphosphate + H(+). Functionally, catalyzes the attachment of tyrosine to tRNA(Tyr) in a two-step reaction: tyrosine is first activated by ATP to form Tyr-AMP and then transferred to the acceptor end of tRNA(Tyr). The polypeptide is Tyrosine--tRNA ligase (Haloarcula marismortui (strain ATCC 43049 / DSM 3752 / JCM 8966 / VKM B-1809) (Halobacterium marismortui)).